Reading from the N-terminus, the 786-residue chain is m7GpppN-mRNA hydrolase dcap-2 (786 aa).

Residues 25–61 show a composition bias toward polar residues; the sequence is QKQNKSTEEPPSSVQKLLASLQQAQNKSDLSEQPSTS. Positions 25 to 148 are disordered; the sequence is QKQNKSTEEP…QQQQQYKGPR (124 aa). A compositionally biased stretch (basic residues) spans 62-72; that stretch reads KPKKNEKRKKA. Composition is skewed to polar residues over residues 101–111 and 118–133; these read MQQQAENARIS and QVST…TAPE. Positions 134-144 are enriched in low complexity; it reads QQNYQQQQQQY. In terms of domain architecture, Nudix hydrolase spans 238-366; sequence STVPTYGAIL…LPAYLQGNKF (129 aa). Positions 273–294 match the Nudix box motif; that stretch reads GKINQAEPPRDAAIRETFEETG. Residues E288 and E292 each contribute to the Mg(2+) site. Disordered stretches follow at residues 556–576 and 623–655; these read IMHS…TPTA and ISST…SSQV. Composition is skewed to polar residues over residues 623-632 and 646-655; these read ISSTQKQSIP and SASLSGSSQV.

The protein belongs to the Nudix hydrolase family. DCP2 subfamily. In terms of assembly, may be a component of the decapping complex composed of dcap-1 and dcap-2. Mg(2+) is required as a cofactor. The cofactor is Mn(2+). As to expression, expressed in sensory neurons.

Its subcellular location is the cytoplasmic granule. It is found in the cytoplasm. The protein resides in the perinuclear region. It carries out the reaction a 5'-end (N(7)-methyl 5'-triphosphoguanosine)-ribonucleoside in mRNA + H2O = N(7)-methyl-GDP + a 5'-end phospho-ribonucleoside in mRNA + 2 H(+). It catalyses the reaction a 5'-end (N(2),N(2),N(7)-trimethyl 5'-triphosphoguanosine)-ribonucleoside in mRNA + H2O = N(2),N(2),N(7)-trimethyl-GDP + a 5'-end phospho-ribonucleoside in mRNA + 2 H(+). Inhibited by capped and uncapped RNA. Not inhibited by dinucleotide cap or methylated nucleotide analogs. Functionally, decapping metalloenzyme that catalyzes the cleavage of the cap structure on mRNAs. Removes the 7-methyl guanine cap structure from mRNA molecules, yielding a 5'-phosphorylated mRNA fragment and 7m-GDP. RNA-decapping enzyme although it does not bind the RNA cap. May contribute to gene regulation in multiple RNA pathways including monomethylguanosine- and trimethylguanosine-capped RNAs. In oocytes, may play a role in the response to stress induced by heat shock, osmotic stress and anoxia. Required for the developmental axon guidance and regrowth of PLM touch receptor neurons. Early in embryogenesis, plays a role in ciliary shape formation in sensory neurons. Promotes survival at high temperatures. This Caenorhabditis elegans protein is m7GpppN-mRNA hydrolase dcap-2.